Reading from the N-terminus, the 753-residue chain is MSECPVRKSNVGGGGTRNHDWWPAQLRLNILRQHTPVSNPLDKDFDYAAAFKSLDYEGLKKDLTKLMTDSQDWWPADFGHYGGLFIRMAWHSAGTYRVTDGRGGGGEGQQRFAPLNSWPDNVSLDKARRLLWPIKQKYGNKISWSDLLLLTGNVALESMGFKTFGFAGGRPDTWEADESVYWGAETTWLGNEDRYSEGQEGHEGHGVVQGDESKKQHTDIHNRDLQSPLASSHMGLIYVNPEGPDGIPDPVASAKDIRVTFGRMAMNDEETVALIAGGHSFGKTHGAGPTHHVGKEPEAAPIEHQGLGWANSFGQGKGPDTITSGLEVTWTPTPTKWGMGYLEYLYKFDWEPTKSPAGANQWVAKNAEPTIPDAYDPNKKKLPTMLTTDIALRMDPAYDKICRDYLANPDKFADAFARAWFKLLHRDMGPRTRWIGPEVPSEILPWEDYIPPVDYQIIDDNDIAALKKEILATGVAPKKLIFVAWSSASSFRGSDKRGGANGARIRLAPQNEWKVNDPSTLREVLAALESVQQKFNDSSSGKKVSLADLIVLGGVAALEQASGLVVPFTPGRNDATQEHTDVHSFTHLEPHADGFRSYGKGTKRVRTEQFLIDRASLLTLSAPELTALIGGLRVLEANYDGSSYGVLTKTPGKLTNDYFVNLLDTNTAWKAADNEGEVFIGYDRKTHDKKWTATRADLIFGAHAELRALAEVYAAVDGEEKFKRDFVAAWHKVMNLDRFDLKQEGRGQNAPKL.

Residues 90–238 constitute a cross-link (tryptophyl-tyrosyl-methioninium (Trp-Tyr) (with M-264)); the sequence is WHSAGTYRVT…LASSHMGLIY (149 aa). Catalysis depends on His-91, which acts as the Proton acceptor. The tract at residues 196 to 220 is disordered; it reads SEGQEGHEGHGVVQGDESKKQHTDI. The segment at residues 238-264 is a cross-link (tryptophyl-tyrosyl-methioninium (Tyr-Met) (with W-90)); sequence YVNPEGPDGIPDPVASAKDIRVTFGRM. His-279 is a heme b binding site.

Belongs to the peroxidase family. Peroxidase/catalase subfamily. In terms of assembly, homodimer or homotetramer. Heme b serves as cofactor. Post-translationally, formation of the three residue Trp-Tyr-Met cross-link is important for the catalase, but not the peroxidase activity of the enzyme.

The protein localises to the cytoplasm. It catalyses the reaction H2O2 + AH2 = A + 2 H2O. It carries out the reaction 2 H2O2 = O2 + 2 H2O. Inhibited by KCN. Bifunctional enzyme with both catalase and broad-spectrum peroxidase activity. This is Catalase-peroxidase from Neurospora crassa (strain ATCC 24698 / 74-OR23-1A / CBS 708.71 / DSM 1257 / FGSC 987).